Consider the following 368-residue polypeptide: Phospho-N-acetylmuramoyl-pentapeptide-transferase (368 aa).

The next 9 membrane-spanning stretches (helical) occupy residues 30–50 (AAAI…IRYL), 72–92 (LPTM…FLWA), 98–118 (HVWL…IDDY), 139–159 (ISLG…AVLL), 170–190 (LSID…TAVS), 201–221 (GLAS…SYLA), 238–258 (GGEI…FLWF), 264–286 (EIIM…ALLI), and 345–365 (KIVI…LMTL).

Belongs to the glycosyltransferase 4 family. MraY subfamily. The cofactor is Mg(2+).

The protein localises to the cell inner membrane. It catalyses the reaction UDP-N-acetyl-alpha-D-muramoyl-L-alanyl-gamma-D-glutamyl-meso-2,6-diaminopimeloyl-D-alanyl-D-alanine + di-trans,octa-cis-undecaprenyl phosphate = di-trans,octa-cis-undecaprenyl diphospho-N-acetyl-alpha-D-muramoyl-L-alanyl-D-glutamyl-meso-2,6-diaminopimeloyl-D-alanyl-D-alanine + UMP. It participates in cell wall biogenesis; peptidoglycan biosynthesis. Functionally, catalyzes the initial step of the lipid cycle reactions in the biosynthesis of the cell wall peptidoglycan: transfers peptidoglycan precursor phospho-MurNAc-pentapeptide from UDP-MurNAc-pentapeptide onto the lipid carrier undecaprenyl phosphate, yielding undecaprenyl-pyrophosphoryl-MurNAc-pentapeptide, known as lipid I. This is Phospho-N-acetylmuramoyl-pentapeptide-transferase from Chlorobium phaeobacteroides (strain DSM 266 / SMG 266 / 2430).